We begin with the raw amino-acid sequence, 299 residues long: Virginiamycin B lyase (299 aa).

His-229 is a binding site for substrate. Glu-269 is a binding site for Mg(2+). The active-site Proton acceptor is the His-271. A Mg(2+)-binding site is contributed by Glu-286.

The protein belongs to the Vgb family. Monomer. It depends on Mg(2+) as a cofactor.

In terms of biological role, inactivates the type B streptogramin antibiotics by linearizing the lactone ring at the ester linkage, generating a free phenylglycine carboxylate and converting the threonyl moiety into 2-amino-butenoic acid. In Bordetella bronchiseptica (strain ATCC BAA-588 / NCTC 13252 / RB50) (Alcaligenes bronchisepticus), this protein is Virginiamycin B lyase.